A 241-amino-acid polypeptide reads, in one-letter code: Zinc finger CCHC domain-containing protein 24 (241 aa).

A phosphoserine mark is found at Ser-65 and Ser-93. The CCHC-type zinc finger occupies 132–149; it reads YLCHLCFNKGHYIKDCPQ.

In Mus musculus (Mouse), this protein is Zinc finger CCHC domain-containing protein 24.